An 82-amino-acid chain; its full sequence is Cyclin-dependent kinases regulatory subunit (82 aa).

The protein belongs to the CKS family. In terms of assembly, forms a homohexamer that can probably bind six kinase subunits.

Its function is as follows. Binds to the catalytic subunit of the cyclin dependent kinases and is essential for their biological function. The polypeptide is Cyclin-dependent kinases regulatory subunit (cks1) (Dictyostelium discoideum (Social amoeba)).